A 190-amino-acid chain; its full sequence is GTP cyclohydrolase 1 (190 aa).

Zn(2+)-binding residues include Cys78, His81, and Cys150.

This sequence belongs to the GTP cyclohydrolase I family. As to quaternary structure, toroid-shaped homodecamer, composed of two pentamers of five dimers.

It catalyses the reaction GTP + H2O = 7,8-dihydroneopterin 3'-triphosphate + formate + H(+). It functions in the pathway cofactor biosynthesis; 7,8-dihydroneopterin triphosphate biosynthesis; 7,8-dihydroneopterin triphosphate from GTP: step 1/1. With respect to regulation, k(+) ions moderately increases the Vmax, whereas UTP and Ca(2+) and Mg(2+) ions drastically increase the Km for GTP. The protein is GTP cyclohydrolase 1 (folE) of Bacillus subtilis (strain 168).